A 620-amino-acid polypeptide reads, in one-letter code: MHKPKLANAITAAAIASSISTKNNNNNSIVGGSSSSSSGGNKSKRPRQFGQYSIGVGTGAGAGGLLRSDDSGFDHLDYSSLIGDSIDLEHYISAMEARRHDQEPDVWAQLQQKESDILLAAELGKALLEKNEELVKQQEKLIEDYSSKIEKLEQEKHVLRQKLAIAEDESDQRVLELQSDLTELKDKLQTQDTAIRQAEKEKTILIDELQHQNTRLTEQIQEAHATELKLSAQIQELKDQYHYRNSSLQEHVNSLESIKTELNLTTGKRQELERRLQIAQEEKESLTSSLEESSDRIHMLERHAREQETKLETTLQALERSQRENNVLSERLGADTNSSTPGRKSLQFEMECDEDDGSYTETGKPNQMFVEARSVYIQLKSLVDSLKVSHDDDSGLNSDISLELESMDNTISSSERHEDGHLAIEFRQGMLSSMSDELTRLLLNLDAGNFKKMLDQTRNLVLEQEDEIKRSHQLIQQLEAKVTVTDVELQNVKEERDQARGDLEDNTDRDELLSKAQTERDAANDRRTKAEVELAKTRVELMQANSQLLESIQQKVELSQQLEQWQMDMHELIDEQMRSKLINNRRAMAAESSAPSPPSSAAANLAKRVTSYKLWSLFQR.

Over residues 23–41 (NNNNNSIVGGSSSSSSGGN) the composition is skewed to low complexity. The segment at 23 to 53 (NNNNNSIVGGSSSSSSGGNKSKRPRQFGQYS) is disordered. 2 coiled-coil regions span residues 120–331 (AAEL…LSER) and 461–575 (VLEQ…LIDE). Basic and acidic residues-rich tracts occupy residues 493 to 503 (KEERDQARGDL) and 509 to 528 (RDEL…DRRT). The disordered stretch occupies residues 493–528 (KEERDQARGDLEDNTDRDELLSKAQTERDAANDRRT).

It belongs to the BICDR family. In terms of assembly, may homodimerize but does not interact with BicD. May interact with eEF1gamma; The interaction is probably indirect.

Its function is as follows. Functions redundantly with BicD. Involved in formation and/or development of mechanosensory organs during metamorphosis. During macrochaetae development, together with BicD, involved in Rab 6 and Spn-F stability and distribution and actin cytoskeleton organization. This is Bicaudal D-related protein homolog from Drosophila melanogaster (Fruit fly).